The sequence spans 553 residues: Zinc finger matrin-type protein 1 (553 aa).

Positions 16-36 (TPSSPAATCSGPMAGGDTSSN) are disordered. Matrin-type zinc fingers lie at residues 61-91 (TFCK…KVRL), 125-155 (KFCG…KMRQ), 223-253 (KYCK…NQAR), and 275-305 (YVCP…KESM). 2 disordered regions span residues 341-402 (QFRQ…DQRV) and 428-553 (HISR…ILGF). Positions 350–362 (DSCDYEEEEEQEP) are enriched in acidic residues. Residues 431–453 (RSPTSQDSSDNSSGSSSDESSGS) are compositionally biased toward low complexity. The segment covering 456–476 (KDKRRKRKHHRESRLRGSGRI) has biased composition (basic residues). Residues 477–513 (RRGDENSEKRKRKGEDADSGKEDNKHDRGKTSGGDKD) are compositionally biased toward basic and acidic residues.

The protein localises to the nucleus. The polypeptide is Zinc finger matrin-type protein 1 (zmat1) (Xenopus tropicalis (Western clawed frog)).